A 114-amino-acid chain; its full sequence is Large ribosomal subunit protein uL22 (114 aa).

It belongs to the universal ribosomal protein uL22 family. As to quaternary structure, part of the 50S ribosomal subunit.

Functionally, this protein binds specifically to 23S rRNA; its binding is stimulated by other ribosomal proteins, e.g. L4, L17, and L20. It is important during the early stages of 50S assembly. It makes multiple contacts with different domains of the 23S rRNA in the assembled 50S subunit and ribosome. The globular domain of the protein is located near the polypeptide exit tunnel on the outside of the subunit, while an extended beta-hairpin is found that lines the wall of the exit tunnel in the center of the 70S ribosome. The chain is Large ribosomal subunit protein uL22 from Aeromonas salmonicida (strain A449).